We begin with the raw amino-acid sequence, 147 residues long: Transthyretin (147 aa).

Positions 1–20 are cleaved as a signal peptide; that stretch reads MASLRLFLLCLAGLVFVSEA. Cys-30 is subject to Sulfocysteine. Residue Lys-35 participates in L-thyroxine binding. Position 62 is a 4-carboxyglutamate (Glu-62). Ser-72 is modified (phosphoserine). Glu-74 contributes to the L-thyroxine binding site. Asn-118 is a glycosylation site (N-linked (GlcNAc...) asparagine). Ser-137 provides a ligand contact to L-thyroxine.

It belongs to the transthyretin family. In terms of assembly, homotetramer. Dimer of dimers. In the homotetramer, subunits assemble around a central channel that can accommodate two ligand molecules. Interacts with RBP4. In terms of processing, sulfonation of the reactive cysteine Cys-30 enhances the stability of the native conformation of TTR, avoiding misassembly of the protein leading to amyloid formation. As to expression, detected in plasma (at protein level). Detected in liver.

It is found in the secreted. Functionally, thyroid hormone-binding protein. Probably transports thyroxine from the bloodstream to the brain. The chain is Transthyretin (Ttr) from Mus musculus (Mouse).